Here is a 369-residue protein sequence, read N- to C-terminus: Aminomethyltransferase (369 aa).

It belongs to the GcvT family. In terms of assembly, the glycine cleavage system is composed of four proteins: P, T, L and H.

The enzyme catalyses N(6)-[(R)-S(8)-aminomethyldihydrolipoyl]-L-lysyl-[protein] + (6S)-5,6,7,8-tetrahydrofolate = N(6)-[(R)-dihydrolipoyl]-L-lysyl-[protein] + (6R)-5,10-methylene-5,6,7,8-tetrahydrofolate + NH4(+). In terms of biological role, the glycine cleavage system catalyzes the degradation of glycine. The polypeptide is Aminomethyltransferase (Synechococcus sp. (strain WH7803)).